Reading from the N-terminus, the 150-residue chain is Large ribosomal subunit protein bL9 (150 aa).

Belongs to the bacterial ribosomal protein bL9 family.

In terms of biological role, binds to the 23S rRNA. The polypeptide is Large ribosomal subunit protein bL9 (Streptococcus gordonii (strain Challis / ATCC 35105 / BCRC 15272 / CH1 / DL1 / V288)).